Reading from the N-terminus, the 418-residue chain is MSVSEANGTETIKPPMNGNPYGPNPSDFLSRVNNFSIIESTLREGEQFANAFFDTEKKIQIAKALDNFGVDYIELTSPVASEQSRQDCEAICKLGLKCKILTHIRCHMDDARVAVETGVDGVDVVIGTSQYLRKYSHGKDMTYIIDSATEVINFVKSKGIEVRFSSEDSFRSDLVDLLSLYKAVDKIGVNRVGIADTVGCATPRQVYDLIRTLRGVVSCDIECHFHNDTGMAIANAYCALEAGATHIDTSILGIGERNGITPLGALLARMYVTDREYITHKYKLNQLRELENLVADAVEVQIPFNNYITGMCAFTHKAGIHAKAILANPSTYEILKPEDFGMSRYVHVGSRLTGWNAIKSRAEQLNLHLTDAQAKELTVRIKKLADVRTLAMDDVDRVLREYHADLSDADRITKEASA.

The span at 1–10 shows a compositional bias: polar residues; it reads MSVSEANGTE. The tract at residues 1–25 is disordered; that stretch reads MSVSEANGTETIKPPMNGNPYGPNP. Low complexity predominate over residues 14–25; the sequence is PPMNGNPYGPNP. Residues 35-288 form the Pyruvate carboxyltransferase domain; it reads FSIIESTLRE…THKYKLNQLR (254 aa). Residues arginine 43, glutamate 44, and histidine 103 each contribute to the 2-oxoglutarate site. Glutamate 44 is a binding site for L-lysine. Glutamate 44 serves as a coordination point for Zn(2+). Aspartate 123 contacts L-lysine. 2-oxoglutarate-binding residues include arginine 163, serine 165, threonine 197, histidine 224, and histidine 226. Residue threonine 197 coordinates L-lysine. Zn(2+) is bound by residues histidine 224 and histidine 226. Catalysis depends on histidine 321, which acts as the Proton acceptor.

This sequence belongs to the alpha-IPM synthase/homocitrate synthase family. Homocitrate synthase LYS20/LYS21 subfamily. It depends on Mg(2+) as a cofactor. Requires Mn(2+) as cofactor. Zn(2+) is required as a cofactor. Co(2+) serves as cofactor.

The protein resides in the mitochondrion. The catalysed reaction is acetyl-CoA + 2-oxoglutarate + H2O = (2R)-homocitrate + CoA + H(+). It functions in the pathway amino-acid biosynthesis; L-lysine biosynthesis via AAA pathway; L-alpha-aminoadipate from 2-oxoglutarate: step 1/5. With respect to regulation, the activity is controled by feedback inhibition by L-lysine, the final product of the pathway that acts as a competitive inhibitor of 2-oxoglutarate. In terms of biological role, catalyzes the aldol-type condensation of 2-oxoglutarate with acetyl-CoA to yield homocitrate, the first step of the alpha-aminoadipate (AAA) lysine biosynthesis pathway. In Schizosaccharomyces pombe (strain 972 / ATCC 24843) (Fission yeast), this protein is Homocitrate synthase, mitochondrial.